A 425-amino-acid polypeptide reads, in one-letter code: Inhibin beta A chain (425 aa).

The first 20 residues, M1–S20, serve as a signal peptide directing secretion. Positions S21–R309 are excised as a propeptide. N165 carries N-linked (GlcNAc...) asparagine glycosylation. Residues K260–R289 are disordered. Residues K263–E275 are compositionally biased toward basic and acidic residues. Intrachain disulfides connect C313–C321, C320–C390, C349–C422, and C353–C424.

It belongs to the TGF-beta family. Dimeric, linked by one or more disulfide bonds. Inhibin A is a dimer of alpha/INHA and beta-A/INHBA. Activin A is a homodimer of beta-A/INHBA. Activin AB is a dimer of beta-A/INHBA and beta-B/INHBB. Interacts with FST and FSTL3; these interactions prevent activin A interaction to its type II receptor. Activin A interacts with ACVR2A. Activin A interacts with BMPR2. Inhibin A interacts with ACVR1; this interaction creates a non-signaling complex (NSC) that inhibits ACVR1-mediated BMP signaling. Inhibin A interacts with ACVR2A.

The protein localises to the secreted. In terms of biological role, inhibins/activins are involved in regulating a number of diverse functions such as hypothalamic and pituitary hormone secretion, gonadal hormone secretion, germ cell development and maturation, erythroid differentiation, insulin secretion, nerve cell survival, embryonic axial development or bone growth, depending on their subunit composition. Its function is as follows. Activin A is a homodimer of INHBA that plays a role in several essential biological processes including embryonic development, stem cell maintenance and differentiation, haematopoiesis, cell proliferation and tissue fibrosis. Signals through type I (such as ACVR1B or ACVR1C) and type II receptors (such as ACVR2A, ACVR2B or BMPR2) which, upon ligand binding, phosphorylate SMAD2 and SMAD3 intracellular signaling mediators that form a complex with SMAD4, translocate to the nucleus and modulate gene expression. Can also activate alternative non-canonical intracellular signaling pathways including the p38 MAPK, extracellular signal-regulated kinases 1/2 (ERK1/2) and c-Jun N-terminal kinases (JNKs) to modulate cell migration and differentiation. Alternatively, promotes osteoblastic differentiation via ACVRL1-SMAD1/5/9 pathway. In addition, can engage the type I receptor ACVR1 to form an ACVR1-activin A-type II receptor non-signaling complex (NSC) that renders receptors unavailable for engagement with BMPs, hence resulting in an apparent inhibition of ACVR1-mediated BMP signaling. Inhibin A is a dimer of alpha/INHA and beta-A/INHBA that functions as a feedback regulator in the hypothalamic-pituitary-gonadal (HPG) axis. Inhibits the secretion of FSH from the anterior pituitary gland by acting on pituitary gonadotrope cells. Antagonizes activin A by binding to the proteoglycan, betaglycan, and forming a stable complex with and, thereby, sequestering type II activin receptors while excluding type I receptor. The protein is Inhibin beta A chain (INHBA) of Ovis aries (Sheep).